We begin with the raw amino-acid sequence, 118 residues long: Small ribosomal subunit protein uS13 (118 aa).

Positions 93 to 118 (RGLPVRGQRTKTNARTRKGPRKPIRK) are disordered.

The protein belongs to the universal ribosomal protein uS13 family. As to quaternary structure, part of the 30S ribosomal subunit. Forms a loose heterodimer with protein S19. Forms two bridges to the 50S subunit in the 70S ribosome.

Functionally, located at the top of the head of the 30S subunit, it contacts several helices of the 16S rRNA. In the 70S ribosome it contacts the 23S rRNA (bridge B1a) and protein L5 of the 50S subunit (bridge B1b), connecting the 2 subunits; these bridges are implicated in subunit movement. Contacts the tRNAs in the A and P-sites. In Pseudomonas fluorescens (strain ATCC BAA-477 / NRRL B-23932 / Pf-5), this protein is Small ribosomal subunit protein uS13.